Reading from the N-terminus, the 78-residue chain is Delta-conotoxin-like TxMKLT1-0111 (78 aa).

Residues 1–22 (MKLTCMMIVAVLFLTAWTFATA) form the signal peptide. Residues 23–49 (DDSGNGLENLFSNAHHQMKNPEASKLN) constitute a propeptide that is removed on maturation. Disulfide bonds link Cys-53-Cys-68, Cys-60-Cys-72, and Cys-67-Cys-77.

The protein belongs to the conotoxin O1 superfamily. In terms of tissue distribution, expressed by the venom duct.

Its subcellular location is the secreted. Its function is as follows. Delta-conotoxins bind to site 6 of voltage-gated sodium channels (Nav) and inhibit the inactivation process. This chain is Delta-conotoxin-like TxMKLT1-0111, found in Conus textile (Cloth-of-gold cone).